A 467-amino-acid chain; its full sequence is tRNA-2-methylthio-N(6)-dimethylallyladenosine synthase (467 aa).

The segment at 1–20 is disordered; it reads MSDDTTQIEPAMAQETSPRA. The region spanning 23-143 is the MTTase N-terminal domain; the sequence is RKVFVKTYGC…LPNALARVRG (121 aa). 6 residues coordinate [4Fe-4S] cluster: Cys32, Cys68, Cys106, Cys184, Cys188, and Cys191. Residues 170 to 402 enclose the Radical SAM core domain; the sequence is RKRGVSAFLT…QALLSAQQYA (233 aa). The region spanning 405 to 467 is the TRAM domain; the sequence is DSMIGRKMDV…TNSLIAQKLA (63 aa).

Belongs to the methylthiotransferase family. MiaB subfamily. In terms of assembly, monomer. The cofactor is [4Fe-4S] cluster.

It is found in the cytoplasm. The enzyme catalyses N(6)-dimethylallyladenosine(37) in tRNA + (sulfur carrier)-SH + AH2 + 2 S-adenosyl-L-methionine = 2-methylsulfanyl-N(6)-dimethylallyladenosine(37) in tRNA + (sulfur carrier)-H + 5'-deoxyadenosine + L-methionine + A + S-adenosyl-L-homocysteine + 2 H(+). In terms of biological role, catalyzes the methylthiolation of N6-(dimethylallyl)adenosine (i(6)A), leading to the formation of 2-methylthio-N6-(dimethylallyl)adenosine (ms(2)i(6)A) at position 37 in tRNAs that read codons beginning with uridine. In Brucella canis (strain ATCC 23365 / NCTC 10854 / RM-666), this protein is tRNA-2-methylthio-N(6)-dimethylallyladenosine synthase.